A 333-amino-acid chain; its full sequence is Glycerol-3-phosphate dehydrogenase [NAD(P)+] (333 aa).

4 residues coordinate NADPH: S13, W14, R34, and K108. K108, G137, and S139 together coordinate sn-glycerol 3-phosphate. Residue A141 coordinates NADPH. K192, D245, S255, R256, and N257 together coordinate sn-glycerol 3-phosphate. The Proton acceptor role is filled by K192. Residue R256 participates in NADPH binding. E282 contacts NADPH.

The protein belongs to the NAD-dependent glycerol-3-phosphate dehydrogenase family.

Its subcellular location is the cytoplasm. It carries out the reaction sn-glycerol 3-phosphate + NAD(+) = dihydroxyacetone phosphate + NADH + H(+). It catalyses the reaction sn-glycerol 3-phosphate + NADP(+) = dihydroxyacetone phosphate + NADPH + H(+). It participates in membrane lipid metabolism; glycerophospholipid metabolism. Functionally, catalyzes the reduction of the glycolytic intermediate dihydroxyacetone phosphate (DHAP) to sn-glycerol 3-phosphate (G3P), the key precursor for phospholipid synthesis. This chain is Glycerol-3-phosphate dehydrogenase [NAD(P)+], found in Thioalkalivibrio sulfidiphilus (strain HL-EbGR7).